The sequence spans 147 residues: MTSSAASSPALDDIEEGIALRPKFDAAGLVTCVTTDARSGEVLMVAHMNAEALEKTVQSGEAWYYSRSRKRLWKKGESSGHVQRVLEIRVDCDQDAVWLRVEQAGAACHTGRQSCFYRRIDRDGSGAPLLTMVDADRLFDPAKIYPK.

D91 lines the Mg(2+) pocket. C92 provides a ligand contact to Zn(2+). The Mg(2+) site is built by D93 and D95. Positions 108 and 115 each coordinate Zn(2+).

It belongs to the PRA-CH family. In terms of assembly, homodimer. The cofactor is Mg(2+). Zn(2+) is required as a cofactor.

The protein localises to the cytoplasm. It carries out the reaction 1-(5-phospho-beta-D-ribosyl)-5'-AMP + H2O = 1-(5-phospho-beta-D-ribosyl)-5-[(5-phospho-beta-D-ribosylamino)methylideneamino]imidazole-4-carboxamide. Its pathway is amino-acid biosynthesis; L-histidine biosynthesis; L-histidine from 5-phospho-alpha-D-ribose 1-diphosphate: step 3/9. In terms of biological role, catalyzes the hydrolysis of the adenine ring of phosphoribosyl-AMP. The chain is Phosphoribosyl-AMP cyclohydrolase from Rhodopseudomonas palustris (strain BisB5).